Consider the following 258-residue polypeptide: Acyl-[acyl-carrier-protein]--UDP-N-acetylglucosamine O-acyltransferase (258 aa).

This sequence belongs to the transferase hexapeptide repeat family. LpxA subfamily. As to quaternary structure, homotrimer.

The protein localises to the cytoplasm. It catalyses the reaction a (3R)-hydroxyacyl-[ACP] + UDP-N-acetyl-alpha-D-glucosamine = a UDP-3-O-[(3R)-3-hydroxyacyl]-N-acetyl-alpha-D-glucosamine + holo-[ACP]. It functions in the pathway glycolipid biosynthesis; lipid IV(A) biosynthesis; lipid IV(A) from (3R)-3-hydroxytetradecanoyl-[acyl-carrier-protein] and UDP-N-acetyl-alpha-D-glucosamine: step 1/6. Functionally, involved in the biosynthesis of lipid A, a phosphorylated glycolipid that anchors the lipopolysaccharide to the outer membrane of the cell. The polypeptide is Acyl-[acyl-carrier-protein]--UDP-N-acetylglucosamine O-acyltransferase (Pseudomonas savastanoi pv. phaseolicola (strain 1448A / Race 6) (Pseudomonas syringae pv. phaseolicola (strain 1448A / Race 6))).